A 121-amino-acid chain; its full sequence is Putative ferredoxin (121 aa).

To E.coli YkgJ.

The chain is Putative ferredoxin from Acinetobacter calcoaceticus.